The following is an 832-amino-acid chain: Vacuolar transmembrane transporter penV (832 aa).

A run of 2 helical transmembrane segments spans residues 39 to 59 and 117 to 137; these read LYTQ…AFCI and FFKF…AIIL. The disordered stretch occupies residues 152–171; that stretch reads WDNPPGNKTTSPIDGSEKEK. N-linked (GlcNAc...) asparagine glycosylation occurs at asparagine 158. Residues 178-198 traverse the membrane as a helical segment; it reads YLWIYVLFAYVFSGLAIYMLL. Asparagine 214 carries an N-linked (GlcNAc...) asparagine glycan. Positions 291–322 are disordered; sequence NDGNALPLTEQQPRDADDERSGLLSGHDNEHV. Residues 302-321 show a composition bias toward basic and acidic residues; sequence QPRDADDERSGLLSGHDNEH. 9 consecutive transmembrane segments (helical) span residues 434–454, 483–503, 524–544, 560–582, 587–608, 623–645, 650–672, 687–707, and 713–733; these read FVIG…ASLL, GLPT…YEWL, FFFS…ASGF, TIAL…LLIL, LFPF…FLSA, FSYG…YSVF, LICL…QLLY, MICN…IGVL, and ITRS…SYWF. The interval 754-777 is disordered; the sequence is PGGGDISPSPSSTLSPPSGLDRDS. Over residues 759–771 the composition is skewed to low complexity; it reads ISPSPSSTLSPPS.

This sequence belongs to the CSC1 (TC 1.A.17) family.

It localises to the vacuole membrane. Its function is as follows. Vacuolar transmembrane transporter that participates in the first stage of the beta-lactam biosynthesis (the formation of the ACV tripeptide), probably taking part in the supply of amino acids from the vacuolar lumen to the vacuole-anchored ACV synthetase. This Penicillium rubens (strain ATCC 28089 / DSM 1075 / NRRL 1951 / Wisconsin 54-1255) (Penicillium chrysogenum) protein is Vacuolar transmembrane transporter penV.